The sequence spans 75 residues: Phytosulfokines 3 (75 aa).

A signal peptide spans 1-22; it reads MSPKVIAICLVALLLPISISHG. Residues 23 to 66 constitute a propeptide that is removed on maturation; it reads GRIGPIEPSKASSKVVERGNYDGRVEGCEEDDCLVERLLVAHLD. Y67 and Y69 each carry sulfotyrosine. The propeptide occupies 72–75; sequence GKHN.

This sequence belongs to the phytosulfokine family. Sulfation is important for activity and for the binding to a putative membrane receptor. Post-translationally, PSK-alpha is produced by endopeptidase digestion. PSK-beta is produced from PSK-alpha by exopeptidase digestion.

The protein localises to the secreted. Its function is as follows. Promotes plant cell differentiation, organogenesis and somatic embryogenesis as well as cell proliferation. In Oryza sativa subsp. japonica (Rice), this protein is Phytosulfokines 3 (PSK3).